Reading from the N-terminus, the 41-residue chain is Photosystem I reaction center subunit IX (41 aa).

The helical transmembrane segment at 7–27 threads the bilayer; the sequence is YLSTAPVLATVWMIITAGILI.

Belongs to the PsaJ family.

Its subcellular location is the cellular thylakoid membrane. Functionally, may help in the organization of the PsaE and PsaF subunits. The polypeptide is Photosystem I reaction center subunit IX (Trichodesmium erythraeum (strain IMS101)).